The primary structure comprises 275 residues: 3-methyl-2-oxobutanoate hydroxymethyltransferase (275 aa).

Mg(2+) contacts are provided by aspartate 49 and aspartate 88. 3-methyl-2-oxobutanoate is bound by residues 49–50, aspartate 88, and lysine 118; that span reads DS. Residue glutamate 120 participates in Mg(2+) binding. The active-site Proton acceptor is glutamate 187.

This sequence belongs to the PanB family. Homodecamer; pentamer of dimers. Mg(2+) serves as cofactor.

The protein localises to the cytoplasm. It carries out the reaction 3-methyl-2-oxobutanoate + (6R)-5,10-methylene-5,6,7,8-tetrahydrofolate + H2O = 2-dehydropantoate + (6S)-5,6,7,8-tetrahydrofolate. It functions in the pathway cofactor biosynthesis; (R)-pantothenate biosynthesis; (R)-pantoate from 3-methyl-2-oxobutanoate: step 1/2. In terms of biological role, catalyzes the reversible reaction in which hydroxymethyl group from 5,10-methylenetetrahydrofolate is transferred onto alpha-ketoisovalerate to form ketopantoate. The protein is 3-methyl-2-oxobutanoate hydroxymethyltransferase of Bartonella henselae (strain ATCC 49882 / DSM 28221 / CCUG 30454 / Houston 1) (Rochalimaea henselae).